Reading from the N-terminus, the 502-residue chain is Cytochrome P450 monooxygenase verC (502 aa).

Residues I9–G29 traverse the membrane as a helical segment. Residues N124, N190, N271, and N342 are each glycosylated (N-linked (GlcNAc...) asparagine). Residue C444 coordinates heme.

Belongs to the cytochrome P450 family. It depends on heme as a cofactor.

The protein localises to the membrane. Its pathway is mycotoxin biosynthesis. In terms of biological role, cytochrome P450 monooxygenase; part of the gene cluster that mediates the biosynthesis of 11'-deoxyverticillin A, one of the dimeric epipolythiodioxopiperazines (ETPs) from the verticillin family that act as mycotoxins. 11'-deoxyverticillin A is required for normal conidiation. The nonribosomal peptide synthetase verP is speculated to be responsible for condensation of amino acids to form the carbon skeleton of verticillin, whereas the cluster-specific tailoring enzymes are involved in further modifications leading to the production of 11'-deoxyverticillin A. In Clonostachys rogersoniana, this protein is Cytochrome P450 monooxygenase verC.